Consider the following 490-residue polypeptide: Scarecrow-like transcription factor PAT1 (490 aa).

A GRAS domain is found at 110–490 (TLEAISRRDL…RDLVASCAWK (381 aa)). The leucine repeat I (LRI) stretch occupies residues 117–178 (RDLRADLVSC…AQLASSGSSI (62 aa)). A VHIID region spans residues 197–262 (MHILYEVCPY…GGPPRIRITG (66 aa)). Positions 228-232 (VHIID) match the VHIID motif. Positions 278-310 (IVGNRLAKLAKQFNVPFEFNSVSVSVSEVKPKN) are leucine repeat II (LRII). The PFYRE stretch occupies residues 319-413 (LAVNFAFVLH…QHCLARDVVN (95 aa)). Positions 416–490 (ACEGADRVER…RDLVASCAWK (75 aa)) are SAW.

Belongs to the GRAS family.

The protein resides in the cytoplasm. Probable transcription factor involved in phytochrome A (phyA) signal transduction. This is Scarecrow-like transcription factor PAT1 (PAT1) from Arabidopsis thaliana (Mouse-ear cress).